A 1048-amino-acid chain; its full sequence is Putative truncated guanine nucleotide exchange factor SDC25 (1048 aa).

Disordered stretches follow at residues S208 to S242 and L419 to E444. The segment covering T212–S224 has biased composition (low complexity). The 133-residue stretch at S578–K710 folds into the N-terminal Ras-GEF domain. Residues D748–K995 form the Ras-GEF domain. Positions R997–K1048 are disordered. The segment covering S1010 to P1032 has biased composition (basic and acidic residues). Basic residues predominate over residues Q1035–K1048.

Promotes the exchange of Ras-bound GDP by GTP. The chain is Putative truncated guanine nucleotide exchange factor SDC25 (SDC25) from Saccharomyces cerevisiae (strain ATCC 204508 / S288c) (Baker's yeast).